The following is a 448-amino-acid chain: Trigger factor (448 aa).

In terms of domain architecture, PPIase FKBP-type spans Gly-160–Pro-245.

Belongs to the FKBP-type PPIase family. Tig subfamily.

The protein resides in the cytoplasm. The enzyme catalyses [protein]-peptidylproline (omega=180) = [protein]-peptidylproline (omega=0). Involved in protein export. Acts as a chaperone by maintaining the newly synthesized protein in an open conformation. Functions as a peptidyl-prolyl cis-trans isomerase. In Dehalococcoides mccartyi (strain ATCC BAA-2266 / KCTC 15142 / 195) (Dehalococcoides ethenogenes (strain 195)), this protein is Trigger factor.